The chain runs to 338 residues: Ketol-acid reductoisomerase (NADP(+)) (338 aa).

The 181-residue stretch at 1 to 181 (MKVYYENDAD…GGTKAGVIET (181 aa)) folds into the KARI N-terminal Rossmann domain. Residues 24–27 (FGSQ), K47, S50, S52, and 82–85 (DQVQ) contribute to the NADP(+) site. H107 is a catalytic residue. Residue G133 participates in NADP(+) binding. The KARI C-terminal knotted domain maps to 182-327 (NFKDETETDL…EKLRGMMSWL (146 aa)). Residues D190, E194, E226, and E230 each contribute to the Mg(2+) site. S251 provides a ligand contact to substrate.

Belongs to the ketol-acid reductoisomerase family. Mg(2+) is required as a cofactor.

The enzyme catalyses (2R)-2,3-dihydroxy-3-methylbutanoate + NADP(+) = (2S)-2-acetolactate + NADPH + H(+). The catalysed reaction is (2R,3R)-2,3-dihydroxy-3-methylpentanoate + NADP(+) = (S)-2-ethyl-2-hydroxy-3-oxobutanoate + NADPH + H(+). The protein operates within amino-acid biosynthesis; L-isoleucine biosynthesis; L-isoleucine from 2-oxobutanoate: step 2/4. It participates in amino-acid biosynthesis; L-valine biosynthesis; L-valine from pyruvate: step 2/4. In terms of biological role, involved in the biosynthesis of branched-chain amino acids (BCAA). Catalyzes an alkyl-migration followed by a ketol-acid reduction of (S)-2-acetolactate (S2AL) to yield (R)-2,3-dihydroxy-isovalerate. In the isomerase reaction, S2AL is rearranged via a Mg-dependent methyl migration to produce 3-hydroxy-3-methyl-2-ketobutyrate (HMKB). In the reductase reaction, this 2-ketoacid undergoes a metal-dependent reduction by NADPH to yield (R)-2,3-dihydroxy-isovalerate. The sequence is that of Ketol-acid reductoisomerase (NADP(+)) from Chloroherpeton thalassium (strain ATCC 35110 / GB-78).